The chain runs to 107 residues: MGDSVLSAIQQTITQRKSANPSESYVAQLLHKGEDKILKKVIEEAGEVLMASKDKNPSHLVYEVADLWFHTMILLTHHDLKAEDVLDELARRQGLSGLVEKAARTES.

Belongs to the PRA-PH family.

It localises to the cytoplasm. The enzyme catalyses 1-(5-phospho-beta-D-ribosyl)-ATP + H2O = 1-(5-phospho-beta-D-ribosyl)-5'-AMP + diphosphate + H(+). It functions in the pathway amino-acid biosynthesis; L-histidine biosynthesis; L-histidine from 5-phospho-alpha-D-ribose 1-diphosphate: step 2/9. The polypeptide is Phosphoribosyl-ATP pyrophosphatase (hisE) (Neisseria meningitidis serogroup B (strain ATCC BAA-335 / MC58)).